Consider the following 177-residue polypeptide: RNA pyrophosphohydrolase (177 aa).

The Nudix hydrolase domain maps to 6 to 149 (GYRPNVGIVI…KRDVYRRVMK (144 aa)). Positions 38–59 (GGINAGETAEQAMYRELFEEVG) match the Nudix box motif.

The protein belongs to the Nudix hydrolase family. RppH subfamily. The cofactor is a divalent metal cation.

In terms of biological role, accelerates the degradation of transcripts by removing pyrophosphate from the 5'-end of triphosphorylated RNA, leading to a more labile monophosphorylated state that can stimulate subsequent ribonuclease cleavage. This is RNA pyrophosphohydrolase from Edwardsiella ictaluri (strain 93-146).